Consider the following 575-residue polypeptide: Muellerian-inhibiting factor (575 aa).

A signal peptide spans 1-24 (MPGPSLSLALVLSAMGALLRPGTP). Positions 25–466 (REEVFSTSAL…ERSGSARAQR (442 aa)) are excised as a propeptide. N-linked (GlcNAc...) asparagine glycans are attached at residues asparagine 78 and asparagine 344. Intrachain disulfides connect cysteine 477–cysteine 541, cysteine 503–cysteine 572, and cysteine 507–cysteine 574.

Belongs to the TGF-beta family. As to quaternary structure, homodimer; disulfide-linked. Preproprotein is proteolytically processed to generate N- and C-terminal cleavage products that homodimerize and associate to form a biologically active non-covalent complex. Binding of the non-covalent complex to AMHR2 induces dissociation of the pro-region from the mature C-terminal dimer. The N-terminal portion of the protein, despite having no intrinsic activity, has the role of amplifying the activity of the C-terminus. Expressed in fetal testis and adult ovaries.

It localises to the secreted. In terms of biological role, plays an important role in several reproductive functions. Induces Muellerian duct regression during male fetal sexual differentiation and plays a role in Leydig cell differentiation and function. In female acts as a negative regulator of the primordial to primary follicle transition and decreases FSH sensitivity of growing follicles. AMH signals by binding to a specific type-II receptor, AMHR2, that heterodimerizes with type-I receptors (ACVR1 and BMPR1A), and recruiting SMAD proteins that are translocated to the nucleus to regulate target gene expression. This Bos taurus (Bovine) protein is Muellerian-inhibiting factor (AMH).